The primary structure comprises 123 residues: Large ribosomal subunit protein bL12 (123 aa).

Residues 98–123 (KEGVSKEEAEEIKSKLEDAGATVELK) form a disordered region. A compositionally biased stretch (basic and acidic residues) spans 100 to 115 (GVSKEEAEEIKSKLED).

It belongs to the bacterial ribosomal protein bL12 family. In terms of assembly, homodimer. Part of the ribosomal stalk of the 50S ribosomal subunit. Forms a multimeric L10(L12)X complex, where L10 forms an elongated spine to which 2 to 4 L12 dimers bind in a sequential fashion. Binds GTP-bound translation factors.

In terms of biological role, forms part of the ribosomal stalk which helps the ribosome interact with GTP-bound translation factors. Is thus essential for accurate translation. This chain is Large ribosomal subunit protein bL12, found in Halothermothrix orenii (strain H 168 / OCM 544 / DSM 9562).